The chain runs to 223 residues: Endonuclease V (223 aa).

Mg(2+)-binding residues include D35 and D103.

The protein belongs to the endonuclease V family. The cofactor is Mg(2+).

It localises to the cytoplasm. The enzyme catalyses Endonucleolytic cleavage at apurinic or apyrimidinic sites to products with a 5'-phosphate.. Its function is as follows. DNA repair enzyme involved in the repair of deaminated bases. Selectively cleaves double-stranded DNA at the second phosphodiester bond 3' to a deoxyinosine leaving behind the intact lesion on the nicked DNA. This is Endonuclease V from Salmonella paratyphi A (strain ATCC 9150 / SARB42).